Consider the following 409-residue polypeptide: Adenosine receptor A2a (409 aa).

Over 1–4 the chain is Extracellular; sequence MSSS. Residues 5–29 traverse the membrane as a helical segment; the sequence is VYITVELVIAVLAILGNVLVCWAVW. The Cytoplasmic portion of the chain corresponds to 30-39; the sequence is INSNLQNVTN. A helical membrane pass occupies residues 40–63; sequence YFVVSLAAADIAVGVLAIPFAITI. Residues 64-74 lie on the Extracellular side of the membrane; it reads STGFCAACHGC. Cystine bridges form between Cys-68/Cys-156, Cys-71/Cys-143, and Cys-74/Cys-163. A helical membrane pass occupies residues 75-97; sequence LFFACFVLVLTQSSIFSLLTITI. The Cytoplasmic portion of the chain corresponds to 98–117; sequence DRYIAIRIPLRYNGLVTCTR. Residues 118 to 140 traverse the membrane as a helical segment; it reads AKGIIAICWVLSFAIGLTPMLGW. The Extracellular portion of the chain corresponds to 141-170; sequence NNCSQPKGDKNHSESCDEGQVTCLFEDVVP. N-linked (GlcNAc...) asparagine glycosylation is found at Asn-142 and Asn-151. Glu-166 is an adenosine binding site. The chain crosses the membrane as a helical span at residues 171–195; the sequence is MNYMVYYNFFAFVLVPLLLMLGIYL. Topologically, residues 196–231 are cytoplasmic; that stretch reads RIFLAARRQLKQMESQPLPGERTRSTLQKEVHPAKS. The chain crosses the membrane as a helical span at residues 232 to 255; the sequence is LAIIVGLFALCCLPLNIINCFTFF. Asn-250 provides a ligand contact to adenosine. A disulfide bridge links Cys-256 with Cys-259. The Extracellular segment spans residues 256 to 263; the sequence is CPECDHAP. Residues 264-287 traverse the membrane as a helical segment; sequence PWLMYLTIILSHGNSVVNPLIYAY. Adenosine-binding residues include Ser-274 and His-275. The Cytoplasmic portion of the chain corresponds to 288 to 409; that stretch reads RIREFRQTFR…PPAHGGAGVS (122 aa). Disordered stretches follow at residues 316 to 336 and 369 to 409; these read TSAR…LRLN and QRSH…AGVS.

The protein belongs to the G-protein coupled receptor 1 family. As to quaternary structure, interacts (via cytoplasmic C-terminal domain) with USP4; the interaction is direct. May interact with DRD4. Interacts with NECAB2. Interacts (via cytoplasmic C-terminal domain) with GAS2L2; interaction enhances receptor-mediated adenylyl cyclase activity. In terms of processing, ubiquitinated. Deubiquitinated by USP4; leading to stabilization and expression at the cell surface.

It localises to the cell membrane. Functionally, receptor for adenosine. The activity of this receptor is mediated by G proteins which activate adenylyl cyclase. This is Adenosine receptor A2a (ADORA2A) from Cavia porcellus (Guinea pig).